The sequence spans 507 residues: Trigger factor (507 aa).

In terms of domain architecture, PPIase FKBP-type spans 162–243 (GDFVSLDLSA…VRGVKEKELP (82 aa)). The disordered stretch occupies residues 434–507 (NLPRRPSGEA…DSELPASETK (74 aa)). Positions 442–460 (EAEDDVRDISDELDAEELE) are enriched in acidic residues. Residues 461 to 488 (VPAAAPSAEVTAAAGDEATATATATDAD) are compositionally biased toward low complexity.

This sequence belongs to the FKBP-type PPIase family. Tig subfamily.

It is found in the cytoplasm. It carries out the reaction [protein]-peptidylproline (omega=180) = [protein]-peptidylproline (omega=0). In terms of biological role, involved in protein export. Acts as a chaperone by maintaining the newly synthesized protein in an open conformation. Functions as a peptidyl-prolyl cis-trans isomerase. The polypeptide is Trigger factor (Parafrankia sp. (strain EAN1pec)).